The sequence spans 226 residues: UPF0173 metal-dependent hydrolase GFO_2312 (226 aa).

Belongs to the UPF0173 family.

This chain is UPF0173 metal-dependent hydrolase GFO_2312, found in Christiangramia forsetii (strain DSM 17595 / CGMCC 1.15422 / KT0803) (Gramella forsetii).